A 1031-amino-acid chain; its full sequence is Protein translocase subunit SecA (1031 aa).

Residues Gln-143, 161-165 (GEGKT), and Asp-661 each bind ATP. A compositionally biased stretch (basic and acidic residues) spans 963 to 973 (KERLVAKHEES). A disordered region spans residues 963–1031 (KERLVAKHEE…GKKYKNCCGR (69 aa)). The Zn(2+) site is built by Cys-1017, Cys-1019, Cys-1028, and Cys-1029.

The protein belongs to the SecA family. In terms of assembly, monomer and homodimer. Part of the essential Sec protein translocation apparatus which comprises SecA, SecYEG and auxiliary proteins SecDF. Other proteins may also be involved. Zn(2+) is required as a cofactor.

It localises to the cell inner membrane. The protein resides in the cytoplasm. The enzyme catalyses ATP + H2O + cellular proteinSide 1 = ADP + phosphate + cellular proteinSide 2.. In terms of biological role, part of the Sec protein translocase complex. Interacts with the SecYEG preprotein conducting channel. Has a central role in coupling the hydrolysis of ATP to the transfer of proteins into and across the cell membrane, serving as an ATP-driven molecular motor driving the stepwise translocation of polypeptide chains across the membrane. The protein is Protein translocase subunit SecA of Prosthecochloris aestuarii (strain DSM 271 / SK 413).